Here is a 1820-residue protein sequence, read N- to C-terminus: Cation channel sperm-associated targeting subunit tau (1820 aa).

The C2 domain occupies 87–222 (DSEELEITQE…QKGCFIEEVQ (136 aa)). Disordered stretches follow at residues 360–383 (SEET…ELEN), 403–443 (LLDN…TEVH), 695–722 (EVSM…SSME), and 838–857 (SSTK…SGSS). Residues 415–443 (PTLNQSDQDNSTADASKNDESTPSPTEVH) are compositionally biased toward polar residues.

As to quaternary structure, component of the CatSper complex or CatSpermasome composed of the core pore-forming members CATSPER1, CATSPER2, CATSPER3 and CATSPER4 as well as auxiliary members CATSPERB, CATSPERG, CATSPERD, CATSPERE, CATSPERZ, C2CD6/CATSPERT, TMEM249, TMEM262 and EFCAB9. HSPA1 may be an additional auxiliary complex member. The core complex members CATSPER1, CATSPER2, CATSPER3 and CATSPER4 form a heterotetrameric channel. The auxiliary CATSPERB, CATSPERG, CATSPERD and CATSPERE subunits form a pavilion-like structure over the pore which stabilizes the complex through interactions with CATSPER4, CATSPER3, CATSPER1 and CATSPER2 respectively. SLCO6C1 interacts with CATSPERE and TMEM262/CATSPERH interacts with CATSPERB, further stabilizing the complex. C2CD6/CATSPERT interacts at least with CATSPERD and is required for targeting the CatSper complex in the flagellar membrane. Expressed in testis (at protein level).

It is found in the cell projection. The protein resides in the cilium. The protein localises to the flagellum membrane. Auxiliary component of the CatSper complex, a complex involved in sperm cell hyperactivation. Sperm cell hyperactivation is needed for sperm motility which is essential late in the preparation of sperm for fertilization. Required for CatSper complex targeting and trafficking into the quadrilinear nanodomains. Targets the preassembled CatSper complexes to elongating flagella, where it links the channel-carrying vesicles and motor proteins. The protein is Cation channel sperm-associated targeting subunit tau of Homo sapiens (Human).